Reading from the N-terminus, the 259-residue chain is Tryptophan synthase alpha chain (259 aa).

Active-site proton acceptor residues include E52 and D63.

Belongs to the TrpA family. As to quaternary structure, tetramer of two alpha and two beta chains.

It catalyses the reaction (1S,2R)-1-C-(indol-3-yl)glycerol 3-phosphate + L-serine = D-glyceraldehyde 3-phosphate + L-tryptophan + H2O. It participates in amino-acid biosynthesis; L-tryptophan biosynthesis; L-tryptophan from chorismate: step 5/5. In terms of biological role, the alpha subunit is responsible for the aldol cleavage of indoleglycerol phosphate to indole and glyceraldehyde 3-phosphate. In Streptococcus sanguinis (strain SK36), this protein is Tryptophan synthase alpha chain.